The primary structure comprises 892 residues: LEAF RUST 10 DISEASE-RESISTANCE LOCUS RECEPTOR-LIKE PROTEIN KINASE-like 2.8 (892 aa).

An N-terminal signal peptide occupies residues 1–27; that stretch reads MYYHSLSSYSILFFLFSLFHHLPCASS. The Extracellular segment spans residues 28 to 496; it reads NQGLGWCESL…RFIATLVRYT (469 aa). N-linked (GlcNAc...) asparagine glycans are attached at residues Asn-42, Asn-71, Asn-88, Asn-112, Asn-186, Asn-222, Asn-230, Asn-286, Asn-358, Asn-384, Asn-407, and Asn-458. A helical transmembrane segment spans residues 497–517; the sequence is FIALGALTGVVIVFLVLLCPC. The Cytoplasmic segment spans residues 518–892; it reads FRVQIFRKRK…TNSKLESSSL (375 aa). Residue Thr-547 is modified to Phosphothreonine. The 299-residue stretch at 556-854 folds into the Protein kinase domain; the sequence is KSFTEVVGRG…ALEVPPRPVL (299 aa). Residues 562 to 570 and Lys-584 each bind ATP; that span reads VGRGGFGIV. Tyr-629 is subject to Phosphotyrosine. Residue Asp-680 is the Proton acceptor of the active site. Phosphothreonine occurs at positions 717 and 720.

This sequence belongs to the protein kinase superfamily. Ser/Thr protein kinase family.

It is found in the membrane. It catalyses the reaction L-seryl-[protein] + ATP = O-phospho-L-seryl-[protein] + ADP + H(+). The enzyme catalyses L-threonyl-[protein] + ATP = O-phospho-L-threonyl-[protein] + ADP + H(+). The sequence is that of LEAF RUST 10 DISEASE-RESISTANCE LOCUS RECEPTOR-LIKE PROTEIN KINASE-like 2.8 from Arabidopsis thaliana (Mouse-ear cress).